Here is a 93-residue protein sequence, read N- to C-terminus: Phosphocarrier protein HPr (93 aa).

The HPr domain maps to 2–89 (AERRVNVGWA…KLVAEGLEEL (88 aa)). Catalysis depends on histidine 15, which acts as the Pros-phosphohistidine intermediate.

This sequence belongs to the HPr family.

Its subcellular location is the cytoplasm. Its function is as follows. General (non sugar-specific) component of the phosphoenolpyruvate-dependent sugar phosphotransferase system (sugar PTS). This major carbohydrate active-transport system catalyzes the phosphorylation of incoming sugar substrates concomitantly with their translocation across the cell membrane. The phosphoryl group from phosphoenolpyruvate (PEP) is transferred to the phosphoryl carrier protein HPr by enzyme I. Phospho-HPr then transfers it to the PTS EIIA domain. The chain is Phosphocarrier protein HPr (ptsH) from Streptomyces coelicolor (strain ATCC BAA-471 / A3(2) / M145).